The primary structure comprises 562 residues: MSDQSVPSFRWVQSLKRGLSVWTTPVKADVLNDTRALLSGLDFSKVASVQRMMRRERRDDNDLTNLRDNLKEVDSLMTMRSSQKNMFLKVGSLSKDELMELSSDLNKLKEKVQRSERIIGGSGVYQGNFTTTHLTRRSEILQLVGIQRPGLNRRGGVVKIWDIKEPALLINQFGSTPAVTISCMAEQGGETLNDVVQGLTDLGLLYTAKFPNLGDLEALSNKHSCLKVITQEESQINISGFNLSLSAAVKAGACLVDGGNMLETIKVEESTFTTIIKTLLEIKSKERMFVDITPGQRNPYENLLYKLCLSGEGWPYIASRSQIKGRAWDNTVIEFDVSPRKPPVPIRNGGSPVLTTLKPEVEEQIKRSIESLSVHDTTWIDIEGPPFDPVEMAIYQPDSLKYIHCYRKPNDVKSFKDQSKYCHGILLKDIEFARPGIISAIIKHLPKSMVFTAQGSEDIRRLFDMHGRQDLKIVDVKFTAEQSRVFEELTWKRFEHLCDKHKGIVIKSKKKGTTPASTNAHCALMDCIMFSGVLLGAIPNDKPRRLLPLDILFREPDTTVVL.

A binding site for the cap structure m7GTP region spans residues 53–238 (MRRERRDDND…ITQEESQINI (186 aa)). Positions 381 and 383 each coordinate Mn(2+). 4 residues coordinate Zn(2+): Glu-391, Cys-498, His-501, and Cys-522. Position 526 (Asp-526) interacts with Mn(2+).

The protein belongs to the arenaviridae nucleocapsid protein family. Homomultimerizes to form the nucleocapsid. Binds to viral genomic RNA. Interacts with glycoprotein G2. Interacts with protein Z; this interaction probably directs the encapsidated genome to budding sites. Interacts with protein L; this interaction does not interfere with Z-L interaction. Interacts with host IKBKE (via Protein kinase domain); the interaction inhibits IKBKE kinase activity.

The protein localises to the virion. It localises to the host cytoplasm. Its function is as follows. Encapsidates the genome, protecting it from nucleases. The encapsidated genomic RNA is termed the nucleocapsid (NC). Serves as template for viral transcription and replication. The increased presence of protein N in host cell does not seem to trigger the switch from transcription to replication as observed in other negative strain RNA viruses. Through the interaction with host IKBKE, strongly inhibits the phosphorylation and nuclear translocation of host IRF3, a protein involved in interferon activation pathway, leading to the inhibition of interferon-beta and IRF3-dependent promoters activation. Also encodes a functional 3'-5' exoribonuclease that degrades preferentially dsRNA substrates and thereby participates in the suppression of interferon induction. The protein is Nucleoprotein of Tamiami mammarenavirus (isolate Rat/United States/W 10777/1964) (TAMV).